Consider the following 183-residue polypeptide: Capsid protein (183 aa).

The disordered stretch occupies residues 136–183 (NAPILSTLPETTVVRRRGRSPRRRTPSPRRRRSQSPRRRRSQSRESQC). The segment covering 149–176 (VRRRGRSPRRRTPSPRRRRSQSPRRRRS) has biased composition (basic residues). S155, S162, and S170 each carry phosphoserine; by host. The stretch at 155 to 161 (SPRRRTP) is one 1; half-length repeat. The tract at residues 155–177 (SPRRRTPSPRRRRSQSPRRRRSQ) is 3 X 8 AA repeats of S-P-R-R-R-[PR]-S-Q. The Bipartite nuclear localization signal signature appears at 158-175 (RRTPSPRRRRSQSPRRRR). 2 repeat units span residues 162–169 (SPRRRRSQ) and 170–177 (SPRRRRSQ). Residues 177 to 183 (QSRESQC) form an RNA binding region.

This sequence belongs to the orthohepadnavirus core antigen family. Homodimerizes, then multimerizes. Interacts with cytosol exposed regions of viral L glycoprotein present in the reticulum-to-Golgi compartment. Interacts with human FLNB. Phosphorylated form interacts with host importin alpha; this interaction depends on the exposure of the NLS, which itself depends upon genome maturation and/or phosphorylation of the capsid protein. Interacts with host NUP153. Post-translationally, phosphorylated by host SRPK1, SRPK2, and maybe protein kinase C or GAPDH. Phosphorylation is critical for pregenomic RNA packaging. Protein kinase C phosphorylation is stimulated by HBx protein and may play a role in transport of the viral genome to the nucleus at the late step during the viral replication cycle.

The protein localises to the virion. The protein resides in the host cytoplasm. In terms of biological role, self assembles to form an icosahedral capsid. Most capsids appear to be large particles with an icosahedral symmetry of T=4 and consist of 240 copies of capsid protein, though a fraction forms smaller T=3 particles consisting of 180 capsid proteins. Entering capsids are transported along microtubules to the nucleus. Phosphorylation of the capsid is thought to induce exposure of nuclear localization signal in the C-terminal portion of the capsid protein that allows binding to the nuclear pore complex via the importin (karyopherin-) alpha and beta. Capsids are imported in intact form through the nuclear pore into the nuclear basket, where it probably binds NUP153. Only capsids that contain the mature viral genome can release the viral DNA and capsid protein into the nucleoplasm. Immature capsids get stuck in the basket. Capsids encapsulate the pre-genomic RNA and the P protein. Pre-genomic RNA is reverse-transcribed into DNA while the capsid is still in the cytoplasm. The capsid can then either be directed to the nucleus, providing more genomes for transcription, or bud through the endoplasmic reticulum to provide new virions. This chain is Capsid protein, found in Homo sapiens (Human).